Consider the following 528-residue polypeptide: Lysine--tRNA ligase (528 aa).

Positions 36 to 44 (PSGTVHIGN) match the 'HIGH' region motif. The 'KMSKS' region signature appears at 287–291 (KMSSS).

It belongs to the class-I aminoacyl-tRNA synthetase family.

The protein localises to the cytoplasm. The enzyme catalyses tRNA(Lys) + L-lysine + ATP = L-lysyl-tRNA(Lys) + AMP + diphosphate. This is Lysine--tRNA ligase (lysS) from Treponema pallidum (strain Nichols).